Here is a 102-residue protein sequence, read N- to C-terminus: Citrate lyase acyl carrier protein (102 aa).

Position 14 is an O-(phosphoribosyl dephospho-coenzyme A)serine (Ser14).

The protein belongs to the CitD family. In terms of assembly, oligomer with a subunit composition of (alpha,beta,gamma)6.

The protein localises to the cytoplasm. In terms of biological role, covalent carrier of the coenzyme of citrate lyase. The protein is Citrate lyase acyl carrier protein of Streptococcus mutans serotype c (strain ATCC 700610 / UA159).